The following is a 188-amino-acid chain: MSDRVLEINALAKELKANLKQFPNFPKEGILFEDFLPIFTKPDLFNKLVKAFKLHVGEQKIDYVIGLESRGFLFGPTLALALNAGFVPVRKPGKLPGPTFKVEFQKEYGSDEFEIQQDVIPKGAKVLIVDDILATGGSAFGAGELAKKTGAEIVEYLFVMELDFLKGRDKLDAPVYTLFGGQEEKFTE.

Position 134–138 (134–138) interacts with AMP; that stretch reads ATGGS.

The protein belongs to the purine/pyrimidine phosphoribosyltransferase family. As to quaternary structure, homodimer. It depends on Mg(2+) as a cofactor.

It localises to the cytoplasm. The protein resides in the nucleus. The catalysed reaction is AMP + diphosphate = 5-phospho-alpha-D-ribose 1-diphosphate + adenine. It participates in purine metabolism; AMP biosynthesis via salvage pathway; AMP from adenine: step 1/1. Its function is as follows. Catalyzes a salvage reaction resulting in the formation of AMP, that is energically less costly than de novo synthesis. This chain is Adenine phosphoribosyltransferase (APT1), found in Candida albicans (strain SC5314 / ATCC MYA-2876) (Yeast).